Here is a 141-residue protein sequence, read N- to C-terminus: Large ribosomal subunit protein uL11 (141 aa).

It belongs to the universal ribosomal protein uL11 family. In terms of assembly, part of the ribosomal stalk of the 50S ribosomal subunit. Interacts with L10 and the large rRNA to form the base of the stalk. L10 forms an elongated spine to which L12 dimers bind in a sequential fashion forming a multimeric L10(L12)X complex. Post-translationally, one or more lysine residues are methylated.

Its function is as follows. Forms part of the ribosomal stalk which helps the ribosome interact with GTP-bound translation factors. The chain is Large ribosomal subunit protein uL11 from Clostridium botulinum (strain Kyoto / Type A2).